Consider the following 90-residue polypeptide: Small ribosomal subunit protein bS16 (90 aa).

The protein belongs to the bacterial ribosomal protein bS16 family.

The sequence is that of Small ribosomal subunit protein bS16 from Streptococcus pyogenes serotype M4 (strain MGAS10750).